We begin with the raw amino-acid sequence, 494 residues long: Ribonuclease H (494 aa).

Disordered stretches follow at residues 79 to 148 (NRRR…APPP) and 205 to 231 (RSGL…VGLR). Composition is skewed to polar residues over residues 84–100 (GSTS…NQLA) and 131–143 (PTTS…TRTS). Positions 272-488 (SSVPQVVYVD…ADVLAVAGAR (217 aa)) constitute an RNase H type-1 domain. 4 residues coordinate Mg(2+): Asp-281, Glu-325, Asp-374, and Asp-480.

Belongs to the RNase H family. As to quaternary structure, monomer. It depends on Mg(2+) as a cofactor.

It catalyses the reaction Endonucleolytic cleavage to 5'-phosphomonoester.. In terms of biological role, endonuclease that specifically degrades the RNA of RNA-DNA hybrids. The sequence is that of Ribonuclease H (RNH1) from Crithidia fasciculata.